The chain runs to 1377 residues: DNA-directed RNA polymerase subunit beta' (1377 aa).

Zn(2+) is bound by residues Cys70, Cys72, Cys85, and Cys88. Mg(2+)-binding residues include Asp460, Asp462, and Asp464. Residues Cys808, Cys882, Cys889, and Cys892 each contribute to the Zn(2+) site.

The protein belongs to the RNA polymerase beta' chain family. The RNAP catalytic core consists of 2 alpha, 1 beta, 1 beta' and 1 omega subunit. When a sigma factor is associated with the core the holoenzyme is formed, which can initiate transcription. It depends on Mg(2+) as a cofactor. Requires Zn(2+) as cofactor.

It carries out the reaction RNA(n) + a ribonucleoside 5'-triphosphate = RNA(n+1) + diphosphate. DNA-dependent RNA polymerase catalyzes the transcription of DNA into RNA using the four ribonucleoside triphosphates as substrates. The protein is DNA-directed RNA polymerase subunit beta' of Geotalea daltonii (strain DSM 22248 / JCM 15807 / FRC-32) (Geobacter daltonii).